The following is a 151-amino-acid chain: Cysteine protease inhibitor 5 (151 aa).

2 cysteine pairs are disulfide-bonded: cysteine 13–cysteine 65 and cysteine 114–cysteine 120.

It belongs to the protease inhibitor I3 (leguminous Kunitz-type inhibitor) family.

The protein resides in the vacuole. Its function is as follows. Inhibitor of cysteine proteases. May protect the plant by inhibiting proteases of invading organisms. In Solanum tuberosum (Potato), this protein is Cysteine protease inhibitor 5.